The primary structure comprises 79 residues: MLGSKGLSPTDLRGMTDDHLRVELKNAKEEVFKLRFQSATGQLAHNARLRAVRRDIARIYTVMRERDIGIRSVQEEVSQ.

Belongs to the universal ribosomal protein uL29 family.

The sequence is that of Large ribosomal subunit protein uL29 from Tropheryma whipplei (strain Twist) (Whipple's bacillus).